Here is a 134-residue protein sequence, read N- to C-terminus: 6,7-dimethyl-8-ribityllumazine synthase (134 aa).

Residues phenylalanine 11, 43–45 (AYD), and 67–69 (AIV) contribute to the 5-amino-6-(D-ribitylamino)uracil site. Residue 72–73 (DT) coordinates (2S)-2-hydroxy-3-oxobutyl phosphate. Histidine 75 acts as the Proton donor in catalysis. Phenylalanine 100 contributes to the 5-amino-6-(D-ribitylamino)uracil binding site. A (2S)-2-hydroxy-3-oxobutyl phosphate-binding site is contributed by arginine 115.

It belongs to the DMRL synthase family.

It carries out the reaction (2S)-2-hydroxy-3-oxobutyl phosphate + 5-amino-6-(D-ribitylamino)uracil = 6,7-dimethyl-8-(1-D-ribityl)lumazine + phosphate + 2 H2O + H(+). It functions in the pathway cofactor biosynthesis; riboflavin biosynthesis; riboflavin from 2-hydroxy-3-oxobutyl phosphate and 5-amino-6-(D-ribitylamino)uracil: step 1/2. Functionally, catalyzes the formation of 6,7-dimethyl-8-ribityllumazine by condensation of 5-amino-6-(D-ribitylamino)uracil with 3,4-dihydroxy-2-butanone 4-phosphate. This is the penultimate step in the biosynthesis of riboflavin. This chain is 6,7-dimethyl-8-ribityllumazine synthase, found in Halorubrum lacusprofundi (strain ATCC 49239 / DSM 5036 / JCM 8891 / ACAM 34).